We begin with the raw amino-acid sequence, 364 residues long: Long-wave-sensitive opsin 1 (364 aa).

Residues 1–52 (MTQRWGPQRLAGGQPHAGLEDSTRASIFTYTNSNATRGPFEGPNYHIAPRWV) are Extracellular-facing. The O-linked (GlcNAc) serine glycan is linked to serine 22. Asparagine 34 carries N-linked (GlcNAc...) asparagine glycosylation. The helical transmembrane segment at 53-77 (YHVTSAWMIFVVIASVFTNGLVLAA) threads the bilayer. Residues 78–89 (TMKFKKLRHPLN) lie on the Cytoplasmic side of the membrane. The helical transmembrane segment at 90–115 (WILVNLAVADLAETIIASTISVVNQI) threads the bilayer. The Extracellular portion of the chain corresponds to 116 to 129 (YGYFVLGHPMCVLE). A disulfide bond links cysteine 126 and cysteine 203. Residues 130–149 (GYTVSLCGITGLWSLAIISW) form a helical membrane-spanning segment. Over 150–168 (ERWLVVCKPFGNVRFDAKL) the chain is Cytoplasmic. A helical transmembrane segment spans residues 169–192 (AIAGIAFSWIWAAVWTAPPIFGWS). Over 193–218 (RYWPHGLKTSCGPDVFSGSSYPGVQS) the chain is Extracellular. The helical transmembrane segment at 219-246 (YMIVLMITCCIIPLSVIVLCYLQVWLAI) threads the bilayer. Residues 247-268 (RAVAKQQKESESTQKAEKEVTR) are Cytoplasmic-facing. The helical transmembrane segment at 269–292 (MVMVMIFAYCVCWGPYTFFACFAA) threads the bilayer. At 293-300 (AHPGYAFH) the chain is on the extracellular side. A helical membrane pass occupies residues 301–325 (PLVAALPAYFAKSATIYNPIIYVFM). Lysine 312 carries the post-translational modification N6-(retinylidene)lysine. At 326–364 (NRQFRNCIMQLFGKKVDDGSELSSASRTEASSVSSVSPA) the chain is on the cytoplasmic side.

This sequence belongs to the G-protein coupled receptor 1 family. Opsin subfamily. Phosphorylated on some or all of the serine and threonine residues present in the C-terminal region. In terms of tissue distribution, the three color pigments are found in the cone photoreceptor cells. Expressed in retina.

Its subcellular location is the membrane. Visual pigments are the light-absorbing molecules that mediate vision. They consist of an apoprotein, opsin, covalently linked to cis-retinal. The sequence is that of Long-wave-sensitive opsin 1 (OPN1LW) from Felis catus (Cat).